We begin with the raw amino-acid sequence, 486 residues long: Membrane-bound lytic murein transglycosylase F (486 aa).

The signal sequence occupies residues 1–21; sequence MTRIKLNYFVIGVVALLLALA. Residues 22–268 form a non-LT domain region; sequence LWPNIPWRNG…RLEEKYLGHV (247 aa). The LT domain stretch occupies residues 269 to 486; it reads GSFDYVDTKT…VVGPGWSINN (218 aa). The active site involves Glu313.

It in the N-terminal section; belongs to the bacterial solute-binding protein 3 family. The protein in the C-terminal section; belongs to the transglycosylase Slt family.

The protein localises to the cell outer membrane. The enzyme catalyses Exolytic cleavage of the (1-&gt;4)-beta-glycosidic linkage between N-acetylmuramic acid (MurNAc) and N-acetylglucosamine (GlcNAc) residues in peptidoglycan, from either the reducing or the non-reducing ends of the peptidoglycan chains, with concomitant formation of a 1,6-anhydrobond in the MurNAc residue.. In terms of biological role, murein-degrading enzyme that degrades murein glycan strands and insoluble, high-molecular weight murein sacculi, with the concomitant formation of a 1,6-anhydromuramoyl product. Lytic transglycosylases (LTs) play an integral role in the metabolism of the peptidoglycan (PG) sacculus. Their lytic action creates space within the PG sacculus to allow for its expansion as well as for the insertion of various structures such as secretion systems and flagella. In Yersinia enterocolitica serotype O:8 / biotype 1B (strain NCTC 13174 / 8081), this protein is Membrane-bound lytic murein transglycosylase F.